The primary structure comprises 2290 residues: Protein Ycf2 (2290 aa).

The interval 505-530 (GSNPTERSTRDQKSLKKQQDVSFVPP) is disordered. Residues 511–523 (RSTRDQKSLKKQQ) show a composition bias toward basic and acidic residues. 1639–1646 (GSIGTGRS) lines the ATP pocket.

This sequence belongs to the Ycf2 family.

It localises to the plastid. The protein resides in the chloroplast stroma. Probable ATPase of unknown function. Its presence in a non-photosynthetic plant (Epifagus virginiana) and experiments in tobacco indicate that it has an essential function which is probably not related to photosynthesis. In Ceratophyllum demersum (Rigid hornwort), this protein is Protein Ycf2.